Here is a 410-residue protein sequence, read N- to C-terminus: Probable protein S-acyltransferase 6 (410 aa).

The next 2 helical transmembrane spans lie at 45-65 and 76-96; these read LGLT…FVAS and GVSI…LLML. Residues 108-129 form a disordered region; sequence NSHPPEPEVVDGNTGSGTSQTP. The DHHC domain maps to 147-197; the sequence is KYCDTCMLYRPPRCSHCSICNNCVERFDHHCPWVGQCIAQRNYRFFFMFVF. Cys177 functions as the S-palmitoyl cysteine intermediate in the catalytic mechanism. 2 consecutive transmembrane segments (helical) span residues 191–211 and 235–255; these read FFFM…AFCC and SIAL…LTCF. At Ser325 the chain carries Phosphoserine.

This sequence belongs to the DHHC palmitoyltransferase family.

It localises to the cell membrane. The catalysed reaction is L-cysteinyl-[protein] + hexadecanoyl-CoA = S-hexadecanoyl-L-cysteinyl-[protein] + CoA. In terms of biological role, palmitoyl acyltransferase. This is Probable protein S-acyltransferase 6 (PAT06) from Arabidopsis thaliana (Mouse-ear cress).